Reading from the N-terminus, the 126-residue chain is Histone H2B type 1-H (126 aa).

The segment covering 1–12 (MPEPAKSAPAPK) has biased composition (low complexity). The tract at residues 1-36 (MPEPAKSAPAPKKGSKKALTKAQKKDGKKRKRSRKE) is disordered. Proline 2 is subject to N-acetylproline. Glutamate 3 carries the post-translational modification ADP-ribosyl glutamic acid. Lysine 6 carries the post-translational modification N6-(2-hydroxyisobutyryl)lysine; alternate. Residue lysine 6 is modified to N6-(beta-hydroxybutyryl)lysine; alternate. The residue at position 6 (lysine 6) is an N6-acetyllysine; alternate. Lysine 6 carries the post-translational modification N6-butyryllysine; alternate. Lysine 6 is subject to N6-crotonyllysine; alternate. Lysine 6 carries the post-translational modification N6-lactoyllysine; alternate. Lysine 6 is covalently cross-linked (Glycyl lysine isopeptide (Lys-Gly) (interchain with G-Cter in SUMO2); alternate). ADP-ribosylserine is present on serine 7. Lysine 12 carries the N6-(beta-hydroxybutyryl)lysine; alternate modification. N6-acetyllysine; alternate is present on residues lysine 12 and lysine 13. Lysine 12 and lysine 13 each carry N6-crotonyllysine; alternate. An N6-lactoyllysine; alternate modification is found at lysine 12. Lysine 13 is subject to N6-(2-hydroxyisobutyryl)lysine; alternate. Position 15 is a phosphoserine; by STK4/MST1 (serine 15). An N6-acetyllysine; alternate mark is found at lysine 16, lysine 17, lysine 21, and lysine 24. 4 positions are modified to N6-crotonyllysine; alternate: lysine 16, lysine 17, lysine 21, and lysine 24. N6-lactoyllysine; alternate is present on residues lysine 16, lysine 17, lysine 21, and lysine 24. Lysine 17 bears the N6-glutaryllysine; alternate mark. 2 positions are modified to N6-(2-hydroxyisobutyryl)lysine; alternate: lysine 21 and lysine 24. Lysine 21 is modified (N6-(beta-hydroxybutyryl)lysine; alternate). Lysine 21 bears the N6-butyryllysine; alternate mark. Residue lysine 21 forms a Glycyl lysine isopeptide (Lys-Gly) (interchain with G-Cter in SUMO2); alternate linkage. Lysine 25 is subject to N6-(2-hydroxyisobutyryl)lysine. Residue lysine 35 is modified to N6-(2-hydroxyisobutyryl)lysine; alternate. The residue at position 35 (lysine 35) is an N6-(beta-hydroxybutyryl)lysine; alternate. An N6-crotonyllysine; alternate modification is found at lysine 35. An N6-glutaryllysine; alternate modification is found at lysine 35. Position 35 is an N6-succinyllysine; alternate (lysine 35). Lysine 35 participates in a covalent cross-link: Glycyl lysine isopeptide (Lys-Gly) (interchain with G-Cter in ubiquitin); alternate. Glutamate 36 is modified (polyADP-ribosyl glutamic acid). A Phosphoserine; by AMPK modification is found at serine 37. Lysine 44, lysine 47, and lysine 58 each carry N6-(2-hydroxyisobutyryl)lysine; alternate. Lysine 44 is subject to N6-lactoyllysine; alternate. N6-glutaryllysine; alternate occurs at positions 44 and 47. Lysine 47 carries the post-translational modification N6-methyllysine; alternate. N6,N6-dimethyllysine; alternate is present on lysine 58. Arginine 80 is modified (dimethylated arginine). Position 86 is an N6-(2-hydroxyisobutyryl)lysine; alternate (lysine 86). At lysine 86 the chain carries N6-acetyllysine; alternate. Lysine 86 is subject to N6-lactoyllysine; alternate. Lysine 86 is subject to N6,N6,N6-trimethyllysine; alternate. Arginine 87 and arginine 93 each carry omega-N-methylarginine. Lysine 109 is subject to N6-(2-hydroxyisobutyryl)lysine; alternate. Lysine 109 is subject to N6-(beta-hydroxybutyryl)lysine; alternate. Lysine 109 is modified (N6-lactoyllysine; alternate). Position 109 is an N6-glutaryllysine; alternate (lysine 109). Lysine 109 carries the N6-methyllysine; alternate modification. The O-linked (GlcNAc) serine glycan is linked to serine 113. Residue threonine 116 is modified to Phosphothreonine. N6-(2-hydroxyisobutyryl)lysine; alternate occurs at positions 117 and 121. Position 117 is an N6-(beta-hydroxybutyryl)lysine; alternate (lysine 117). Residues lysine 117 and lysine 121 each carry the N6-lactoyllysine; alternate modification. N6-glutaryllysine; alternate occurs at positions 117 and 121. N6-succinyllysine; alternate is present on residues lysine 117 and lysine 121. Residue lysine 117 is modified to N6-methylated lysine; alternate. A Glycyl lysine isopeptide (Lys-Gly) (interchain with G-Cter in ubiquitin); alternate cross-link involves residue lysine 121.

The protein belongs to the histone H2B family. As to quaternary structure, the nucleosome is a histone octamer containing two molecules each of H2A, H2B, H3 and H4 assembled in one H3-H4 heterotetramer and two H2A-H2B heterodimers. The octamer wraps approximately 147 bp of DNA. Post-translationally, monoubiquitination at Lys-35 (H2BK34Ub) by the MSL1/MSL2 dimer is required for histone H3 'Lys-4' (H3K4me) and 'Lys-79' (H3K79me) methylation and transcription activation at specific gene loci, such as HOXA9 and MEIS1 loci. Similarly, monoubiquitination at Lys-121 (H2BK120Ub) by the RNF20/40 complex gives a specific tag for epigenetic transcriptional activation and is also prerequisite for histone H3 'Lys-4' and 'Lys-79' methylation. It also functions cooperatively with the FACT dimer to stimulate elongation by RNA polymerase II. H2BK120Ub also acts as a regulator of mRNA splicing: deubiquitination by USP49 is required for efficient cotranscriptional splicing of a large set of exons. In terms of processing, phosphorylated on Ser-15 (H2BS14ph) by STK4/MST1 during apoptosis; which facilitates apoptotic chromatin condensation. Also phosphorylated on Ser-15 in response to DNA double strand breaks (DSBs), and in correlation with somatic hypermutation and immunoglobulin class-switch recombination. Phosphorylation at Ser-37 (H2BS36ph) by AMPK in response to stress promotes transcription. GlcNAcylation at Ser-113 promotes monoubiquitination of Lys-121. It fluctuates in response to extracellular glucose, and associates with transcribed genes. Post-translationally, ADP-ribosylated by PARP1 or PARP2 on Ser-7 (H2BS6ADPr) in response to DNA damage. H2BS6ADPr promotes recruitment of CHD1L. Mono-ADP-ribosylated on Glu-3 (H2BE2ADPr) by PARP3 in response to single-strand breaks. Poly ADP-ribosylation on Glu-36 (H2BE35ADPr) by PARP1 regulates adipogenesis: it inhibits phosphorylation at Ser-37 (H2BS36ph), thereby blocking expression of pro-adipogenetic genes. In terms of processing, crotonylation (Kcr) is specifically present in male germ cells and marks testis-specific genes in post-meiotic cells, including X-linked genes that escape sex chromosome inactivation in haploid cells. Crotonylation marks active promoters and enhancers and confers resistance to transcriptional repressors. It is also associated with post-meiotically activated genes on autosomes. Hydroxybutyrylation of histones is induced by starvation. Post-translationally, lactylated in macrophages by EP300/P300 by using lactoyl-CoA directly derived from endogenous or exogenous lactate, leading to stimulates gene transcription.

The protein resides in the nucleus. The protein localises to the chromosome. In terms of biological role, core component of nucleosome. Nucleosomes wrap and compact DNA into chromatin, limiting DNA accessibility to the cellular machineries which require DNA as a template. Histones thereby play a central role in transcription regulation, DNA repair, DNA replication and chromosomal stability. DNA accessibility is regulated via a complex set of post-translational modifications of histones, also called histone code, and nucleosome remodeling. The sequence is that of Histone H2B type 1-H from Mus musculus (Mouse).